We begin with the raw amino-acid sequence, 611 residues long: Elongation factor 1 alpha-like protein (611 aa).

2 disordered regions span residues 1–21 and 105–138; these read MAYS…DEGE and SISQ…DEKT. Serine 124 bears the Phosphoserine mark. The span at 126–138 shows a compositional bias: basic and acidic residues; it reads GERNGEEANDEKT. The 226-residue stretch at 165 to 390 folds into the tr-type G domain; that stretch reads LPHLSFVVLG…LENAAFKISK (226 aa). Residues 174–181 form a G1 region; that stretch reads GHVDAGKS. 174–181 is a GTP binding site; it reads GHVDAGKS. The G2 stretch occupies residues 230 to 234; sequence GVTVS. Positions 251–254 are G3; the sequence is DAPG. GTP-binding positions include 313–316 and 352–354; these read NKMD and SGF. A G4 region spans residues 313–316; sequence NKMD. The segment at 352-354 is G5; it reads SGF.

Belongs to the TRAFAC class translation factor GTPase superfamily. Classic translation factor GTPase family. Component of the Dom34-Hbs1 complex, also named Pelota-HBS1L complex, composed of DOM34 and HBS1.

Its subcellular location is the cytoplasm. The catalysed reaction is GTP + H2O = GDP + phosphate + H(+). Its function is as follows. GTPase component of the Dom34-Hbs1 complex, a complex that recognizes stalled ribosomes and triggers the No-Go Decay (NGD) pathway. The Dom34-Hbs1 complex recognizes ribosomes stalled at the 3' end of an mRNA and engages stalled ribosomes by destabilizing mRNA in the mRNA channel. Following ribosome-binding, the Pelota-HBS1L complex promotes the disassembly of stalled ribosomes, followed by degradation of damaged mRNAs as part of the NGD pathway. The Dom34-Hbs1 complex is also involved in non-functional rRNA decay. The protein is Elongation factor 1 alpha-like protein of Saccharomyces cerevisiae (strain ATCC 204508 / S288c) (Baker's yeast).